We begin with the raw amino-acid sequence, 586 residues long: Zinc finger protein Eos (586 aa).

Disordered regions lie at residues 1-42 and 68-98; these read MHTP…APDF and EKEFLGAPVGPSVSTPNSQHSSPSRSLSANS. Basic and acidic residues predominate over residues 25–34; the sequence is QGKDNLEREL. Residues 79-98 show a composition bias toward polar residues; the sequence is SVSTPNSQHSSPSRSLSANS. Lysine 100 participates in a covalent cross-link: Glycyl lysine isopeptide (Lys-Gly) (interchain with G-Cter in SUMO2). Position 105 is a phosphoserine (serine 105). C2H2-type zinc fingers lie at residues 159-181, 187-209, 215-237, and 248-271; these read LKCDVCGMVCIGPNVLMVHKRSH, FHCNQCGASFTQKGNLLRHIKLH, FKCPFCNYACRRRDALTGHLRTH, and YKCNYCGRSYKQQSTLEEHKERCH. The interval 281 to 586 is interaction with FOXP3; the sequence is AQALTGQPGD…HIVRGEHKVG (306 aa). Position 335 is an N6-acetyllysine (lysine 335). Residues 413–490 are disordered; that stretch reads RLELPGSREA…QPPPTIVVGR (78 aa). Residues 423–433 carry the CTBP-binding motif PEDLG motif; that stretch reads GEGPEDLGDGG. Over residues 476-485 the composition is skewed to pro residues; that stretch reads QGPPPQPPPT. Lysine 501 participates in a covalent cross-link: Glycyl lysine isopeptide (Lys-Gly) (interchain with G-Cter in SUMO2). 2 consecutive C2H2-type zinc fingers follow at residues 531 to 553 and 559 to 583; these read FKCEHCRILFLDHVMFTIHMGCH and FECNICGYHSQDRYEFSSHIVRGEH.

This sequence belongs to the Ikaros C2H2-type zinc-finger protein family. In terms of assembly, self-associates. Interacts with other family members; IKZF1, IKZF2, IKZF3 and IKZF5. Interacts with CTBP2, SPI1 and MITF. Interacts with FOXP3 and CTBP1. As to expression, expressed mainly in the brain. Up-regulated in long term cultured astrocytes. Down-regulated during osteoclast differentiation.

The protein localises to the nucleus. In terms of biological role, DNA-binding protein that binds to the 5'GGGAATRCC-3' Ikaros-binding sequence. Interacts with SPI1 and MITF to repress transcription of the CTSK and ACP5 promoters via recruitment of corepressors SIN3A and CTBP2. May be involved in the development of central and peripheral nervous systems. Essential for the inhibitory function of regulatory T-cells (Treg). Mediates FOXP3-mediated gene silencing in regulatory T-cells (Treg) via recruitment of corepressor CTBP1. The sequence is that of Zinc finger protein Eos (Ikzf4) from Mus musculus (Mouse).